A 659-amino-acid polypeptide reads, in one-letter code: Envelope glycoprotein (659 aa).

Residues 1 to 35 form the signal peptide; sequence MLLISNPRHLGHPMSPGNWKRLIILLSCVFGGAEM. Residues 36–606 lie on the Extracellular side of the membrane; sequence NQQHNNPHQP…NRSPWLTTLL (571 aa). Intrachain disulfides connect cysteine 141/cysteine 162 and cysteine 154/cysteine 167. The interval 278-301 is disordered; sequence LSPPASPIPTVQASPPAPSTPSPT. Residue asparagine 318 is glycosylated (N-linked (GlcNAc...) asparagine; by host). 3 disulfide bridges follow: cysteine 328/cysteine 331, cysteine 328/cysteine 558, and cysteine 550/cysteine 557. A CXXC motif is present at residues 328 to 331; that stretch reads CWLC. 4 N-linked (GlcNAc...) asparagine; by host glycosylation sites follow: asparagine 389, asparagine 395, asparagine 407, and asparagine 427. Residues 466–486 are fusion peptide; that stretch reads VSLTLAVLLGLGVAAGIGTGS. Residues 506 to 532 are a coiled coil; the sequence is AMDTDLRALQDSISKLEDSLTSLSEVV. Residues 533 to 549 form an immunosuppression region; sequence LQNRRGLDLLFLKEGGL. The short motif at 550–558 is the CX6CC element; it reads CAALKEECC. Positions 567-587 form a coiled coil; that stretch reads VRDSMRRLKERLDKRQLEHQK. The helical transmembrane segment at 607 to 627 threads the bilayer; that stretch reads SALAGPLLLLLLLLTLGPCVI. Cysteine 625 carries the S-palmitoyl cysteine; by host lipid modification. The Cytoplasmic portion of the chain corresponds to 628 to 659; that stretch reads NKLVQFINDRVSAVRILVLRHKYQTLDNEDNL. A YXXL motif; contains endocytosis signal motif is present at residues 650-653; the sequence is YQTL.

As to quaternary structure, the mature envelope protein (Env) consists of a trimer of SU-TM heterodimers attached by a labile interchain disulfide bond. Specific enzymatic cleavages in vivo yield mature proteins. Envelope glycoproteins are synthesized as an inactive precursor that is N-glycosylated and processed likely by host cell furin or by a furin-like protease in the Golgi to yield the mature SU and TM proteins. The cleavage site between SU and TM requires the minimal sequence [KR]-X-[KR]-R. The R-peptide is released from the C-terminus of the cytoplasmic tail of the TM protein upon particle formation as a result of proteolytic cleavage by the viral protease. Cleavage of this peptide is required for TM to become fusogenic. Post-translationally, the CXXC motif is highly conserved across a broad range of retroviral envelope proteins. It is thought to participate in the formation of a labile disulfide bond possibly with the CX6CC motif present in the transmembrane protein. Isomerization of the intersubunit disulfide bond to an SU intrachain disulfide bond is thought to occur upon receptor recognition in order to allow membrane fusion. In terms of processing, the transmembrane protein is palmitoylated. The R-peptide is palmitoylated.

The protein localises to the virion membrane. Its subcellular location is the host cell membrane. In terms of biological role, the surface protein (SU) attaches the virus to the host cell by binding to its receptor. This interaction triggers the refolding of the transmembrane protein (TM) and is thought to activate its fusogenic potential by unmasking its fusion peptide. Fusion occurs at the host cell plasma membrane. Its function is as follows. The transmembrane protein (TM) acts as a class I viral fusion protein. Under the current model, the protein has at least 3 conformational states: pre-fusion native state, pre-hairpin intermediate state, and post-fusion hairpin state. During viral and target cell membrane fusion, the coiled coil regions (heptad repeats) assume a trimer-of-hairpins structure, positioning the fusion peptide in close proximity to the C-terminal region of the ectodomain. The formation of this structure appears to drive apposition and subsequent fusion of viral and target cell membranes. Membranes fusion leads to delivery of the nucleocapsid into the cytoplasm. The protein is Envelope glycoprotein (env) of Phascolarctos cinereus (Koala).